Consider the following 331-residue polypeptide: Phenylalanine--tRNA ligase alpha subunit (331 aa).

Position 254 (glutamate 254) interacts with Mg(2+).

It belongs to the class-II aminoacyl-tRNA synthetase family. Phe-tRNA synthetase alpha subunit type 1 subfamily. In terms of assembly, tetramer of two alpha and two beta subunits. Requires Mg(2+) as cofactor.

It localises to the cytoplasm. The enzyme catalyses tRNA(Phe) + L-phenylalanine + ATP = L-phenylalanyl-tRNA(Phe) + AMP + diphosphate + H(+). This is Phenylalanine--tRNA ligase alpha subunit from Blochmanniella pennsylvanica (strain BPEN).